An 84-amino-acid chain; its full sequence is Cell division protein CrgA (84 aa).

Transmembrane regions (helical) follow at residues 31–51 (VAPVMLAMFLIGLAWIVVFYV) and 60–80 (ALDNWNIVVGFGFIAAGFGVS).

It belongs to the CrgA family.

The protein localises to the cell membrane. In terms of biological role, involved in cell division. Coordinates growth and cell division. Required for the formation of the sporulation septa. The polypeptide is Cell division protein CrgA (Streptomyces avermitilis (strain ATCC 31267 / DSM 46492 / JCM 5070 / NBRC 14893 / NCIMB 12804 / NRRL 8165 / MA-4680)).